Reading from the N-terminus, the 467-residue chain is Cruzipain (467 aa).

The N-terminal stretch at 1–18 (MSGWARALLLAAVLVVMA) is a signal peptide. A propeptide spans 19–122 (CLVPAATASL…RVPVKVEVVG (104 aa)) (activation peptide). Intrachain disulfides connect Cys-144-Cys-185, Cys-178-Cys-223, and Cys-277-Cys-325. The active site involves Cys-147. A glycan (N-linked (GlcNAc...) asparagine) is linked at Asn-169. His-284 is an active-site residue. Asn-292 carries an N-linked (GlcNAc...) asparagine glycan. Asn-304 is an active-site residue. The disordered stretch occupies residues 333 to 355 (SAVVGGPGPTPEPTTTTTTSAPG). Low complexity predominate over residues 345–354 (PTTTTTTSAP). A glycan (N-linked (GlcNAc...) asparagine) is linked at Asn-377.

Belongs to the peptidase C1 family.

The catalysed reaction is Broad endopeptidase specificity similar to that of cathepsin L.. With respect to regulation, strongly inhibited by E-64 (L-trans-epoxysuccinylleucylamido(4-guanidino)butane), Leupeptin, and N-alpha-p-tosyl-L-lysine chloromethyl ketone. In terms of biological role, hydrolyzes chromogenic peptides at the carboxyl Arg or Lys; requires at least one more amino acid, preferably Arg, Phe, Val or Leu, between the terminal Arg or Lys and the amino-blocking group. The cysteine protease may play an important role in the development and differentiation of the parasites at several stages of their life cycle. In Trypanosoma cruzi, this protein is Cruzipain.